The following is a 123-amino-acid chain: Large ribosomal subunit protein bL12 (123 aa).

It belongs to the bacterial ribosomal protein bL12 family. Homodimer. Part of the ribosomal stalk of the 50S ribosomal subunit. Forms a multimeric L10(L12)X complex, where L10 forms an elongated spine to which 2 to 4 L12 dimers bind in a sequential fashion. Binds GTP-bound translation factors.

In terms of biological role, forms part of the ribosomal stalk which helps the ribosome interact with GTP-bound translation factors. Is thus essential for accurate translation. The protein is Large ribosomal subunit protein bL12 of Acinetobacter baumannii (strain AB307-0294).